The primary structure comprises 131 residues: D-ribose pyranase (131 aa).

The Proton donor role is filled by histidine 20. Residues aspartate 28, histidine 98, and 120–122 contribute to the substrate site; that span reads YSN.

It belongs to the RbsD / FucU family. RbsD subfamily. Homodecamer.

Its subcellular location is the cytoplasm. It carries out the reaction beta-D-ribopyranose = beta-D-ribofuranose. The protein operates within carbohydrate metabolism; D-ribose degradation; D-ribose 5-phosphate from beta-D-ribopyranose: step 1/2. In terms of biological role, catalyzes the interconversion of beta-pyran and beta-furan forms of D-ribose. This Pediococcus pentosaceus (strain ATCC 25745 / CCUG 21536 / LMG 10740 / 183-1w) protein is D-ribose pyranase.